Reading from the N-terminus, the 141-residue chain is Nucleoside diphosphate kinase (141 aa).

ATP is bound by residues Lys11, Phe59, Arg87, Thr93, Arg104, and Asn114. Catalysis depends on His117, which acts as the Pros-phosphohistidine intermediate.

Belongs to the NDK family. Homotetramer. It depends on Mg(2+) as a cofactor.

It localises to the cytoplasm. It catalyses the reaction a 2'-deoxyribonucleoside 5'-diphosphate + ATP = a 2'-deoxyribonucleoside 5'-triphosphate + ADP. The enzyme catalyses a ribonucleoside 5'-diphosphate + ATP = a ribonucleoside 5'-triphosphate + ADP. Its function is as follows. Major role in the synthesis of nucleoside triphosphates other than ATP. The ATP gamma phosphate is transferred to the NDP beta phosphate via a ping-pong mechanism, using a phosphorylated active-site intermediate. The protein is Nucleoside diphosphate kinase of Nitrosomonas europaea (strain ATCC 19718 / CIP 103999 / KCTC 2705 / NBRC 14298).